A 760-amino-acid polypeptide reads, in one-letter code: Xaa-Pro dipeptidyl-peptidase (760 aa).

Active-site charge relay system residues include Ser349, Asp469, and His499.

This sequence belongs to the peptidase S15 family. In terms of assembly, homodimer.

The protein localises to the cytoplasm. It catalyses the reaction Hydrolyzes Xaa-Pro-|- bonds to release unblocked, N-terminal dipeptides from substrates including Ala-Pro-|-p-nitroanilide and (sequentially) Tyr-Pro-|-Phe-Pro-|-Gly-Pro-|-Ile.. Removes N-terminal dipeptides sequentially from polypeptides having unsubstituted N-termini provided that the penultimate residue is proline. The protein is Xaa-Pro dipeptidyl-peptidase of Streptococcus pyogenes serotype M3 (strain ATCC BAA-595 / MGAS315).